The chain runs to 95 residues: MSQAAVKIDRYITFEGIECDEQARRVLDCIRDCIEAPEASSWSAYFERKLDEITRMGQDELFVVGSQVNYIRALFEHHGHREGLDLLDRIEDECC.

This sequence belongs to the CowN family.

Is required to sustain N(2)-dependent growth in the presence of low levels of carbon monoxide (CO). Probably acts by protecting the N(2) fixation ability of the nitrogenase complex, which is inactivated in the presence of CO. In Allochromatium vinosum (strain ATCC 17899 / DSM 180 / NBRC 103801 / NCIMB 10441 / D) (Chromatium vinosum), this protein is N(2)-fixation sustaining protein CowN.